A 206-amino-acid polypeptide reads, in one-letter code: Putative cryptic phosphonate transport system permease protein PhnE1 (206 aa).

3 helical membrane passes run Trp-30 to Ala-50, Ile-92 to Ala-112, and Met-137 to Ala-157.

If the reading frame is restored, the complex is composed of two ATP-binding proteins (PhnC), two transmembrane proteins (PhnE) and a solute-binding protein (PhnD).

Its subcellular location is the cell inner membrane. In terms of biological role, N-terminal fragment of the PhnE protein, part of a phosphonate usage operon that is cryptic in K12 strains. Growth of K12 strains on phosphonate can be observed when it is used as the sole phosphorus source after a 60 hour lag period, suggesting the operon is activated. An intact PhnE in strain B is (AC A0A140NFA3). Part of the binding-protein-dependent transport system for phosphonates; probably responsible for the translocation of the substrate across the membrane. The sequence is that of Putative cryptic phosphonate transport system permease protein PhnE1 (phnE1) from Escherichia coli (strain K12).